The primary structure comprises 444 residues: Protein CLP1 homolog (444 aa).

ATP is bound by residues E33, K72, and 140–145; that span reads DSGKST.

It belongs to the Clp1 family. Clp1 subfamily. As to quaternary structure, interacts with PCFS4 and SYM5. Forms a complex with cleavage and polyadenylation specificity factor (CPSF) subunits CPSF30, CPSF100, PCFS1, PCFS4, PCFS5, CPSF160 and FY.

It localises to the nucleus. Its function is as follows. Required for endonucleolytic cleavage during polyadenylation-dependent pre-mRNA 3'-end formation. Functions in gametophyte, embryo and postembryotic development. The protein is Protein CLP1 homolog (CLPS3) of Arabidopsis thaliana (Mouse-ear cress).